The chain runs to 391 residues: Carbamoyl phosphate synthase small chain (391 aa).

Residues M1–T199 form a CPSase region. L-glutamine contacts are provided by S61, G251, and G253. One can recognise a Glutamine amidotransferase type-1 domain in the interval T203–T388. C279 acts as the Nucleophile in catalysis. L-glutamine contacts are provided by L280, Q283, N319, G321, and F322. Catalysis depends on residues H361 and E363.

The protein belongs to the CarA family. As to quaternary structure, composed of two chains; the small (or glutamine) chain promotes the hydrolysis of glutamine to ammonia, which is used by the large (or ammonia) chain to synthesize carbamoyl phosphate. Tetramer of heterodimers (alpha,beta)4.

The catalysed reaction is hydrogencarbonate + L-glutamine + 2 ATP + H2O = carbamoyl phosphate + L-glutamate + 2 ADP + phosphate + 2 H(+). The enzyme catalyses L-glutamine + H2O = L-glutamate + NH4(+). Its pathway is amino-acid biosynthesis; L-arginine biosynthesis; carbamoyl phosphate from bicarbonate: step 1/1. It participates in pyrimidine metabolism; UMP biosynthesis via de novo pathway; (S)-dihydroorotate from bicarbonate: step 1/3. Small subunit of the glutamine-dependent carbamoyl phosphate synthetase (CPSase). CPSase catalyzes the formation of carbamoyl phosphate from the ammonia moiety of glutamine, carbonate, and phosphate donated by ATP, constituting the first step of 2 biosynthetic pathways, one leading to arginine and/or urea and the other to pyrimidine nucleotides. The small subunit (glutamine amidotransferase) binds and cleaves glutamine to supply the large subunit with the substrate ammonia. This Synechococcus sp. (strain ATCC 27144 / PCC 6301 / SAUG 1402/1) (Anacystis nidulans) protein is Carbamoyl phosphate synthase small chain.